The primary structure comprises 398 residues: Glucose-1-phosphate adenylyltransferase (398 aa).

Alpha-D-glucose 1-phosphate-binding positions include Y100, G165, 180–181 (EK), and S191.

It belongs to the bacterial/plant glucose-1-phosphate adenylyltransferase family. As to quaternary structure, homotetramer.

The catalysed reaction is alpha-D-glucose 1-phosphate + ATP + H(+) = ADP-alpha-D-glucose + diphosphate. The protein operates within glycan biosynthesis; glycogen biosynthesis. Its function is as follows. Involved in the biosynthesis of ADP-glucose, a building block required for the elongation reactions to produce glycogen. Catalyzes the reaction between ATP and alpha-D-glucose 1-phosphate (G1P) to produce pyrophosphate and ADP-Glc. This Desulfitobacterium hafniense (strain Y51) protein is Glucose-1-phosphate adenylyltransferase.